Consider the following 372-residue polypeptide: GDP-mannose 4,6 dehydratase (372 aa).

Positions 1–20 are disordered; sequence MAHAPARCPSARGSGDGEMG. Ala2 carries the N-acetylalanine modification. NADP(+) contacts are provided by residues 30-35, 55-58, 86-87, 108-112, and Tyr123; these read GITGQD, RRSS, DL, and LGAQS. Residue Thr155 is part of the active site. Active-site nucleophile residues include Glu157 and Tyr179. The NADP(+) site is built by Lys183, His209, and Arg214. Position 323 is a phosphotyrosine (Tyr323).

The protein belongs to the NAD(P)-dependent epimerase/dehydratase family. GDP-mannose 4,6-dehydratase subfamily. It depends on NADP(+) as a cofactor. Highly expressed in pancreas and small intestine. Expressed in thymus, protstate, colon, heart, placenta, liver and kidney. Expressed at low levels in spleen, testis, brain and lung.

It catalyses the reaction GDP-alpha-D-mannose = GDP-4-dehydro-alpha-D-rhamnose + H2O. It participates in nucleotide-sugar biosynthesis; GDP-L-fucose biosynthesis via de novo pathway; GDP-L-fucose from GDP-alpha-D-mannose: step 1/2. Inhibited by GDP-fucose. Its function is as follows. Catalyzes the conversion of GDP-D-mannose to GDP-4-dehydro-6-deoxy-D-mannose. The sequence is that of GDP-mannose 4,6 dehydratase from Homo sapiens (Human).